Consider the following 798-residue polypeptide: Peregrinol diphosphate synthase TPS1, chloroplastic (798 aa).

A chloroplast-targeting transit peptide spans Met1–Lys25. A substrate-binding site is contributed by Lys243. The Mg(2+) site is built by Asp377 and Asp379. Residues Asp377–Asp380 carry the DXDD motif motif. Lys463 contributes to the substrate binding site.

It belongs to the terpene synthase family. Requires Mg(2+) as cofactor. As to expression, mostly expressed in trichomes of leaves and fruits.

The protein localises to the plastid. It localises to the chloroplast. It carries out the reaction peregrinol diphosphate = (2E,6E,10E)-geranylgeranyl diphosphate + H2O. The protein operates within secondary metabolite biosynthesis; terpenoid biosynthesis. Its function is as follows. Involved in the biosynthesis of labdane-type diterpenoid including cleroda-dienols, and peregrinol lactones and furan derivatives, dopaminergic diterpenoids that can bind to dopamine receptors in the human pituitary gland, have probably ability to lower prolactin levels, and are used to treat menstrual cycle disorders (e.g. premenstrual syndrome and mastodynia). Terpene synthase that produces peregrinol diphosphate from geranylgeranyl diphosphate (GGPP). This Vitex agnus-castus (Chaste tree) protein is Peregrinol diphosphate synthase TPS1, chloroplastic.